An 868-amino-acid polypeptide reads, in one-letter code: Dolichyl-phosphooligosaccharide-protein glycotransferase 3 (868 aa).

The Cytoplasmic portion of the chain corresponds to 1 to 16 (MQNAESWFKKYWHLSV). A helical membrane pass occupies residues 17–36 (LVIAALISVKLRILNPWNSV). Topologically, residues 37–101 (FTWTVRLGGN…IAGIIFSATS (65 aa)) are extracellular. The DXD motif 1 signature appears at 45–47 (GND). Asp47 contacts Mn(2+). His81 contacts a glycophospholipid. Residues 102-131 (GESLRAVLAFIPAIGGVLAILPVYLLTREV) form a helical membrane-spanning segment. Over 132-133 (FD) the chain is Cytoplasmic. Residues 134–153 (KRAAVIAAFLIAIVPGQFLQ) traverse the membrane as a helical segment. Residues 154 to 162 (RSILGFNDH) lie on the Extracellular side of the membrane. A Mn(2+)-binding site is contributed by Asp161. Residues 161–163 (DHH) carry the DXD motif 2 motif. Position 162 (His162) interacts with a glycophospholipid. Position 163 (His163) interacts with Mn(2+). The chain crosses the membrane as a helical span at residues 163-184 (HIWEAFWQVSALGTFLLAYNRW). The Cytoplasmic portion of the chain corresponds to 185-199 (KGHDLSHNLTARQMA). The helical transmembrane segment at 200–212 (YPVIAGITIGLYV) threads the bilayer. Over 213 to 215 (LSW) the chain is Extracellular. Residues 216 to 238 (GAGFIIAPIILAFMFFAFVLAGF) traverse the membrane as a helical segment. Topologically, residues 239–241 (VNA) are cytoplasmic. A helical membrane pass occupies residues 242-262 (DRKNLSLVAVVTFAVSALIYL). At 263-279 (PFAFNYPGFSTIFYSPF) the chain is on the extracellular side. A helical membrane pass occupies residues 280–303 (QLLVLLGSAVIAAAFYQIEKWNDV). Topologically, residues 304-312 (GFFERVGLG) are cytoplasmic. The helical transmembrane segment at 313 to 330 (RKGMPLAVIVLTALIMGL) threads the bilayer. The Extracellular portion of the chain corresponds to 331–373 (FFVISPDFARNLLSVVRVVQPKGGALTIAEVYPFFFTHNGEFT). The TIXE motif motif lies at 357–360 (TIAE). A helical transmembrane segment spans residues 374–396 (LTNAVLHFGALFFFGMAGILYSA). The Cytoplasmic segment spans residues 397 to 404 (YRFLKRRS). Residues 405–423 (FPEMALLIWAIAMFIALWG) traverse the membrane as a helical segment. Topologically, residues 424–427 (QNRF) are extracellular. Arg426 provides a ligand contact to a glycophospholipid. Residues 428–452 (AYYFAAVSAVYSALALSVVFDKLHL) traverse the membrane as a helical segment. The Cytoplasmic segment spans residues 453 to 468 (YRALENAIGARNKLSY). Residues 469-494 (FRVAFALLIALAAIYPTYILADAQSS) form a helical membrane-spanning segment. Residues 495–868 (YAGGPNKQWY…QNGEIIQLDL (374 aa)) are Extracellular-facing. Residues 550-552 (WWD) are interacts with target acceptor peptide in protein substrate. The WWDYG motif signature appears at 550–554 (WWDYG). The DKi motif signature appears at 613–622 (EMETGKYYAM).

This sequence belongs to the STT3 family. It depends on Mg(2+) as a cofactor. Mn(2+) is required as a cofactor. The cofactor is Zn(2+).

The protein resides in the cell membrane. It catalyses the reaction an archaeal dolichyl phosphooligosaccharide + [protein]-L-asparagine = an archaeal dolichyl phosphate + a glycoprotein with the oligosaccharide chain attached by N-beta-D-glycosyl linkage to a protein L-asparagine.. Its pathway is protein modification; protein glycosylation. In terms of biological role, oligosaccharyl transferase (OST) that catalyzes the initial transfer of a defined glycan (a glucose-linked heptasaccharide composed of 3 Glc, 2 Man, 2 Gal and a sulfate for A.fulgidus AglB-L) from the lipid carrier dolichol-monophosphate to an asparagine residue within an Asn-X-Ser/Thr consensus motif in nascent polypeptide chains, the first step in protein N-glycosylation. In Archaeoglobus fulgidus (strain ATCC 49558 / DSM 4304 / JCM 9628 / NBRC 100126 / VC-16), this protein is Dolichyl-phosphooligosaccharide-protein glycotransferase 3 (aglB3).